Here is a 505-residue protein sequence, read N- to C-terminus: Lysine--tRNA ligase (505 aa).

2 residues coordinate Mg(2+): Glu-409 and Glu-416.

The protein belongs to the class-II aminoacyl-tRNA synthetase family. As to quaternary structure, homodimer. It depends on Mg(2+) as a cofactor.

It localises to the cytoplasm. The catalysed reaction is tRNA(Lys) + L-lysine + ATP = L-lysyl-tRNA(Lys) + AMP + diphosphate. This chain is Lysine--tRNA ligase, found in Latilactobacillus sakei subsp. sakei (strain 23K) (Lactobacillus sakei subsp. sakei).